The primary structure comprises 166 residues: Endoribonuclease YbeY (166 aa).

Residues H131, H135, and H141 each coordinate Zn(2+).

The protein belongs to the endoribonuclease YbeY family. Zn(2+) serves as cofactor.

Its subcellular location is the cytoplasm. Its function is as follows. Single strand-specific metallo-endoribonuclease involved in late-stage 70S ribosome quality control and in maturation of the 3' terminus of the 16S rRNA. This Dehalococcoides mccartyi (strain CBDB1) protein is Endoribonuclease YbeY.